We begin with the raw amino-acid sequence, 373 residues long: MVGIDTGGKIPPEIMRQATEKTAQLAPLEGGHIYSILKQTLEKLALVGQLQVDPKVQAHELTQSVGEEISRMITEQKKLESRFEELVALQHVLRHQPNKTKLMENQVASERQALQLLLSNCLNEIEVFGKVQPLVESVMAQQAAEQAMKETIEREKNTTAAVRQLRNDLREEKLDHEEKMKEKKKGLSTLKEQLKALKMDTAVSTRYLSKDLTAGNEHERRLQRTQLEDLLKDLGLVQQQIDIEKAVHATQAEFLRQIAAKMADDSSNWASRHDGDLAAREKELEMLKQQHARDLIELKKAEEKFKMEQALKKEREMKATEERERAEFEEMRETRRAQAAVIIQAWWRGHKVRMVMSGGGKKGAKKGGAKKKK.

Residues 145-200 (EQAMKETIEREKNTTAAVRQLRNDLREEKLDHEEKMKEKKKGLSTLKEQLKALKMD) are a coiled coil. Positions 336-365 (RAQAAVIIQAWWRGHKVRMVMSGGGKKGAK) constitute an IQ domain.

This sequence belongs to the DRC9 family. As to quaternary structure, component of the nexin-dynein regulatory complex (N-DRC).

The protein resides in the cytoplasm. The protein localises to the cytoskeleton. It localises to the flagellum axoneme. In terms of biological role, component of the nexin-dynein regulatory complex (N-DRC), a key regulator of ciliary/flagellar motility which maintains the alignment and integrity of the distal axoneme and regulates microtubule sliding in motile axonemes. The sequence is that of Dynein regulatory complex protein 9 from Chlamydomonas reinhardtii (Chlamydomonas smithii).